We begin with the raw amino-acid sequence, 144 residues long: Angiogenin-4 (144 aa).

An N-terminal signal peptide occupies residues 1–24 (MTMSPCPLLLVFVLGLVVIPPTLA). The Proton acceptor role is filled by His-36. Intrachain disulfides connect Cys-49–Cys-103, Cys-62–Cys-114, and Cys-80–Cys-129. The short motif at 54–58 (KERKL) is the Nucleolar localization signal element. His-136 acts as the Proton donor in catalysis.

This sequence belongs to the pancreatic ribonuclease family. Detected in small intestine, caecum and colon, with the highest expression in Paneth cells in the intestinal epithelium.

It localises to the secreted. Its subcellular location is the cytoplasmic vesicle. The protein localises to the secretory vesicle lumen. The protein resides in the nucleus. It is found in the nucleolus. Functionally, has bactericidal activity against E.faecalis and L.monocytogenes, but not against L.innocua and E.coli. Promotes angiogenesis (in vitro). Has low ribonuclease activity (in vitro). Promotes proliferation of melanoma cells, but not of endothelial cells or fibroblasts (in vitro). This is Angiogenin-4 (Ang4) from Mus musculus (Mouse).